Consider the following 289-residue polypeptide: 4-diphosphocytidyl-2-C-methyl-D-erythritol kinase (289 aa).

K15 is a catalytic residue. An ATP-binding site is contributed by 100 to 110; it reads PVSAGLAGGSA. D140 is an active-site residue.

The protein belongs to the GHMP kinase family. IspE subfamily.

It catalyses the reaction 4-CDP-2-C-methyl-D-erythritol + ATP = 4-CDP-2-C-methyl-D-erythritol 2-phosphate + ADP + H(+). Its pathway is isoprenoid biosynthesis; isopentenyl diphosphate biosynthesis via DXP pathway; isopentenyl diphosphate from 1-deoxy-D-xylulose 5-phosphate: step 3/6. Its function is as follows. Catalyzes the phosphorylation of the position 2 hydroxy group of 4-diphosphocytidyl-2C-methyl-D-erythritol. This is 4-diphosphocytidyl-2-C-methyl-D-erythritol kinase from Anaplasma marginale (strain Florida).